Reading from the N-terminus, the 120-residue chain is MITKTSKNAARLKRHARVRAKLSGTPERPRLNVFRSNKHIYAQVIDDVNGVTLVSASTLDKDFNAENGSDTAAAAKVGELVAKRASEKGITNVVFDRGGYLYHGRVKALADAAREAGLEF.

It belongs to the universal ribosomal protein uL18 family. Part of the 50S ribosomal subunit; part of the 5S rRNA/L5/L18/L25 subcomplex. Contacts the 5S and 23S rRNAs.

In terms of biological role, this is one of the proteins that bind and probably mediate the attachment of the 5S RNA into the large ribosomal subunit, where it forms part of the central protuberance. The chain is Large ribosomal subunit protein uL18 from Bacillus licheniformis (strain ATCC 14580 / DSM 13 / JCM 2505 / CCUG 7422 / NBRC 12200 / NCIMB 9375 / NCTC 10341 / NRRL NRS-1264 / Gibson 46).